The sequence spans 89 residues: Small ribosomal subunit protein uS15 (89 aa).

Belongs to the universal ribosomal protein uS15 family. In terms of assembly, part of the 30S ribosomal subunit. Forms a bridge to the 50S subunit in the 70S ribosome, contacting the 23S rRNA.

Its function is as follows. One of the primary rRNA binding proteins, it binds directly to 16S rRNA where it helps nucleate assembly of the platform of the 30S subunit by binding and bridging several RNA helices of the 16S rRNA. Functionally, forms an intersubunit bridge (bridge B4) with the 23S rRNA of the 50S subunit in the ribosome. The chain is Small ribosomal subunit protein uS15 from Staphylococcus saprophyticus subsp. saprophyticus (strain ATCC 15305 / DSM 20229 / NCIMB 8711 / NCTC 7292 / S-41).